Consider the following 242-residue polypeptide: Uridylate kinase (242 aa).

16–19 (KISG) serves as a coordination point for ATP. An involved in allosteric activation by GTP region spans residues 24 to 29 (GDQGFG). G58 is a UMP binding site. ATP-binding residues include G59 and R63. Residues D78 and 139 to 146 (TGNPYFTT) contribute to the UMP site. 3 residues coordinate ATP: T166, Y172, and D175.

This sequence belongs to the UMP kinase family. In terms of assembly, homohexamer.

It localises to the cytoplasm. The catalysed reaction is UMP + ATP = UDP + ADP. Its pathway is pyrimidine metabolism; CTP biosynthesis via de novo pathway; UDP from UMP (UMPK route): step 1/1. With respect to regulation, allosterically activated by GTP. Inhibited by UTP. Catalyzes the reversible phosphorylation of UMP to UDP. This chain is Uridylate kinase, found in Roseobacter denitrificans (strain ATCC 33942 / OCh 114) (Erythrobacter sp. (strain OCh 114)).